We begin with the raw amino-acid sequence, 383 residues long: 2-aminoethylphosphonate--pyruvate transaminase (383 aa).

The residue at position 192 (Lys192) is an N6-(pyridoxal phosphate)lysine.

It belongs to the class-V pyridoxal-phosphate-dependent aminotransferase family. PhnW subfamily. As to quaternary structure, homodimer. It depends on pyridoxal 5'-phosphate as a cofactor.

The enzyme catalyses (2-aminoethyl)phosphonate + pyruvate = phosphonoacetaldehyde + L-alanine. In terms of biological role, involved in phosphonate degradation. The polypeptide is 2-aminoethylphosphonate--pyruvate transaminase (Rhizobium meliloti (strain 1021) (Ensifer meliloti)).